The chain runs to 617 residues: Serine/threonine-protein kinase par-4 (617 aa).

A compositionally biased stretch (polar residues) spans 1-11 (MDAPSTSSGAQ). The disordered stretch occupies residues 1–59 (MDAPSTSSGAQSKLLMPGDDEADEDHQNRGDPNLQQKQKIQLNVDPDYDDDEDDDCFID). Residues 46 to 57 (PDYDDDEDDDCF) are compositionally biased toward acidic residues. Residues 183-446 (YMWGGQIGTG…CLETMIHPWF (264 aa)) enclose the Protein kinase domain. ATP-binding positions include 189 to 197 (IGTGSYGKV) and K212. Residue D310 is the Proton acceptor of the active site. Residues 523–617 (LEAKPGDGPD…CIFRSRTDSA (95 aa)) form a disordered region. Pro residues predominate over residues 587–597 (DPPPTAAPGAP).

It belongs to the protein kinase superfamily. CAMK Ser/Thr protein kinase family. LKB1 subfamily. In terms of assembly, interacts with strd-1. Mg(2+) is required as a cofactor. It depends on Mn(2+) as a cofactor. As to expression, expressed in the gonads, oocytes and early embryos (at protein level).

The protein localises to the cytoplasm. Its subcellular location is the cell cortex. The enzyme catalyses L-seryl-[protein] + ATP = O-phospho-L-seryl-[protein] + ADP + H(+). The catalysed reaction is L-threonyl-[protein] + ATP = O-phospho-L-threonyl-[protein] + ADP + H(+). In terms of biological role, required for cytoplasmic partitioning and asymmetric cell division in early embryogenesis. Controls the asymmetric cell division of the Q.p neuroblast lineage. Involved in mediating cell polarization via regulation of anillin family scaffold proteins. Phosphorylates and restricts the asymmetry effectors mex-5 and mex-6 to the anterior cytoplasm of the zygote and maintains these phosphorylations until fertilization. May phosphorylate par-1. Required for strd-1 localization to the cell cortex of early embryos and may be required for strd-1 protein stabilization. May regulate the integrity of the early embryonic cortex in a strd-1-dependent manner. Phosphorylates and regulates aak-2 in response to oxidative stress and during dauer development. May also play a role in motility, behavioral response, regulation of lifespan and dauer formation through this pathway. Required to establish germline stem cell (GSC) quiescence during dauer development. Acts downstream of unc-40 in dendrite outgrowth. May play a role in cell shedding during embryogenesis, probably by phosphorylating pig-1. The polypeptide is Serine/threonine-protein kinase par-4 (par-4) (Caenorhabditis elegans).